A 121-amino-acid chain; its full sequence is Large ribosomal subunit protein uL14 (121 aa).

The protein belongs to the universal ribosomal protein uL14 family. In terms of assembly, part of the 50S ribosomal subunit. Forms a cluster with proteins L3 and L19. In the 70S ribosome, L14 and L19 interact and together make contacts with the 16S rRNA in bridges B5 and B8.

In terms of biological role, binds to 23S rRNA. Forms part of two intersubunit bridges in the 70S ribosome. This is Large ribosomal subunit protein uL14 from Prochlorococcus marinus (strain NATL1A).